A 270-amino-acid chain; its full sequence is Phthiotriol/phenolphthiotriol dimycocerosates methyltransferase (270 aa).

The protein belongs to the methyltransferase superfamily. Phthiotriol/phenolphthiotriol dimycocerosates methyltransferase family.

In terms of biological role, catalyzes the methylation of the lipid moiety of the intermediate compounds phthiotriol and glycosylated phenolphthiotriol dimycoserosates to form phthiocerol dimycocerosates (DIM A) and glycosylated phenolphthiocerol dimycocerosates (PGL). This is Phthiotriol/phenolphthiotriol dimycocerosates methyltransferase from Mycobacterium leprae (strain TN).